A 227-amino-acid chain; its full sequence is 7-cyano-7-deazaguanine synthase (227 aa).

16-26 provides a ligand contact to ATP; the sequence is FSGGQDSTTCL. Residues C194, C202, C205, and C208 each coordinate Zn(2+).

Belongs to the QueC family. Zn(2+) serves as cofactor.

The enzyme catalyses 7-carboxy-7-deazaguanine + NH4(+) + ATP = 7-cyano-7-deazaguanine + ADP + phosphate + H2O + H(+). It participates in purine metabolism; 7-cyano-7-deazaguanine biosynthesis. Catalyzes the ATP-dependent conversion of 7-carboxy-7-deazaguanine (CDG) to 7-cyano-7-deazaguanine (preQ(0)). This Haemophilus influenzae (strain 86-028NP) protein is 7-cyano-7-deazaguanine synthase.